The primary structure comprises 184 residues: Tumor necrosis factor receptor superfamily member 17 (184 aa).

Residues 1-54 (MLQMAGQCSQNEYFDSLLHACIPCQLRCSSNTPPLTCQRYCNASVTNSVKGTNA) lie on the Extracellular side of the membrane. A TNFR-Cys repeat occupies 7-41 (QCSQNEYFDSLLHACIPCQLRCSSNTPPLTCQRYC). 3 cysteine pairs are disulfide-bonded: C8/C21, C24/C37, and C28/C41. The helical; Signal-anchor for type III membrane protein transmembrane segment at 55 to 77 (ILWTCLGLSLIISLAVFVLMFLL) threads the bilayer. Topologically, residues 78–184 (RKINSEPLKD…TEIEKSISAR (107 aa)) are cytoplasmic.

As to quaternary structure, associates with TRAF1, TRAF2, TRAF3, TRAF5 and TRAF6. Expressed in mature B-cells, but not in T-cells or monocytes.

The protein resides in the cell membrane. The protein localises to the endomembrane system. Its function is as follows. Receptor for TNFSF13B/BLyS/BAFF and TNFSF13/APRIL. Promotes B-cell survival and plays a role in the regulation of humoral immunity. Activates NF-kappa-B and JNK. The protein is Tumor necrosis factor receptor superfamily member 17 (TNFRSF17) of Homo sapiens (Human).